A 173-amino-acid chain; its full sequence is C-phycocyanin-3 beta subunit (173 aa).

Asn-73 carries the post-translational modification N4-methylasparagine. (2R,3E)-phycocyanobilin contacts are provided by Cys-83 and Cys-154.

This sequence belongs to the phycobiliprotein family. As to quaternary structure, heterodimer of an alpha and a beta subunit, which further assembles into trimers and the trimers into hexamers. Contains two covalently linked bilin chromophores.

It localises to the cellular thylakoid membrane. Functionally, light-harvesting photosynthetic bile pigment-protein from the phycobiliprotein complex (phycobilisome, PBS). Phycocyanin is the major phycobiliprotein in the PBS rod. The sequence is that of C-phycocyanin-3 beta subunit (cpcB3) from Microchaete diplosiphon (Fremyella diplosiphon).